The primary structure comprises 213 residues: MQTYQKDFIDFVIGCEVLRFGEFTLKSGRQSPYFFNAGLFNTGARLGRLGEFYAQTLTSGGIRADVLYGPAYKGIPLVAATAIALARVSGEEIPYAFNRKEAKDHGEGGTLVGAPLQGEVLIVDDVITAGTSVRESIEIIRGAGARPCGVLIALDREEIGQSGKSAVEEVQDSLGIPVHAIVGFRHLIDYLRGSGRVRELAALEDYRSRYGTA.

5-phospho-alpha-D-ribose 1-diphosphate is bound at residue Lys26. Position 34–35 (34–35 (FF)) interacts with orotate. Residues 72-73 (YK), Arg99, Lys100, Lys103, His105, and 124-132 (DDVITAGTS) contribute to the 5-phospho-alpha-D-ribose 1-diphosphate site. Residues Thr128 and Arg156 each coordinate orotate.

This sequence belongs to the purine/pyrimidine phosphoribosyltransferase family. PyrE subfamily. As to quaternary structure, homodimer. Requires Mg(2+) as cofactor.

The catalysed reaction is orotidine 5'-phosphate + diphosphate = orotate + 5-phospho-alpha-D-ribose 1-diphosphate. It functions in the pathway pyrimidine metabolism; UMP biosynthesis via de novo pathway; UMP from orotate: step 1/2. In terms of biological role, catalyzes the transfer of a ribosyl phosphate group from 5-phosphoribose 1-diphosphate to orotate, leading to the formation of orotidine monophosphate (OMP). The polypeptide is Orotate phosphoribosyltransferase (Methylococcus capsulatus (strain ATCC 33009 / NCIMB 11132 / Bath)).